Consider the following 290-residue polypeptide: Pyridoxal kinase PdxY (290 aa).

Substrate contacts are provided by residues Ser-12 and 47 to 48 (TQ). ATP is bound by residues Asp-114, Glu-151, Lys-184, and 211–214 (RPLL). Asp-225 provides a ligand contact to substrate.

Belongs to the pyridoxine kinase family. PdxY subfamily. As to quaternary structure, homodimer. It depends on Mg(2+) as a cofactor.

The enzyme catalyses pyridoxal + ATP = pyridoxal 5'-phosphate + ADP + H(+). The protein operates within cofactor metabolism; pyridoxal 5'-phosphate salvage; pyridoxal 5'-phosphate from pyridoxal: step 1/1. Functionally, pyridoxal kinase involved in the salvage pathway of pyridoxal 5'-phosphate (PLP). Catalyzes the phosphorylation of pyridoxal to PLP. This is Pyridoxal kinase PdxY from Pseudomonas entomophila (strain L48).